Reading from the N-terminus, the 173-residue chain is Lithostathine-2 (173 aa).

The first 22 residues, 1-22 (MAQNNVYLILFLCLMFLSYSQG), serve as a signal peptide directing secretion. Residues 41–171 (INCPEGANAY…EAQYSFVCKF (131 aa)) form the C-type lectin domain. Disulfide bonds link Cys43–Cys54, Cys71–Cys169, and Cys144–Cys161.

In terms of tissue distribution, expressed only in regenerating islets and normal exocrine pancreas, but not in normal pancreatic islets. Expressed strongly in pancreas, weakly in liver, but not at all in gall bladder.

The protein resides in the secreted. Its function is as follows. Might act as an inhibitor of spontaneous calcium carbonate precipitation. The chain is Lithostathine-2 (Reg2) from Mus musculus (Mouse).